The primary structure comprises 1554 residues: MDSCCVSVNNKTHFNDSTSSSDAADVLIHSTRAGRDEIQDKSQNKVNIYIRRLSDSEHVHSADERRTEIPPVNLPTASDTAGPEEPLAGIKSNQFAGLFGKTSRKEKSKAQSTIMQTEQLKSKGEDVQISTFSADGRGVVSAALRKRSQGAPIRRNVTVQVLDQDRSQTPAGVQPDPAFPLGDPGTSASVAAITAATLAATAPLMKAQSEMEAQISRVSAELKRLQAAEGSVPPGRTARTDSSSAGRAAHLEEQLNILIQQRLQHLETIQCQQIQLQNRLLGSALDVVASRGNSSGVSQTDSLPLQISGNRSIRLSATDNPSAGRPASVSMDVYRERQTGGHKSPLETPAPRKVIPKPTHWTSSTSTNRPPKSSFKNQGNGRLQDQSPNNRRSPERCALQSVGVERFAMATADNSQPEQSRESQMPSKASVTRSAQEDGSSFVNGQNEQERQGEPTNVSSSSTTVQKASEMLQDLGRLKNEMRSLLQTADAFPVPNAKSTQSSRSRHLAPVATAPPPATAPISMPPEPVDVIAVRAAALNRASVLKSIQPPTSMFEDAGLVLRQVRQSKKTLEENLEAILRAKDGEVLHTQLEALSKNRDVREELRIKKTVDAWINTLSKEIQDDLARESSERIVDAAVSRREAGQRTRAEASAAAKKTSVRAQAGNTRAHTRQPAPAVRNKPAVKQEATQPIVLKSQDDEEYLARLYGKAIYDGQRRTLKKSPYLRFNSPTPKSKPQRPKIVETVKGVKMKSSKTQTSQYVGDVSAMQHSVSEPHFIFSPSDPDKQQQQPGSPVRGYLIPMAIPLGKPRVDCQPPVPSRVIITDKPAIVTTSFPPITVVESKPTPAIRKPNAILLEVQSAPKKRTPQLQIQVQPGVNIESALCSSRQASPTPVIPAESILPPPSIHATEDPHAHEDQQENIFPGTNFLAQADISQETNGGLPDSPIEFKGLPSPPADLYHGPVFPPVPTQSTPLTEPILNTIQQRETLENRLVDWVEQQIMARVITGMFPQPAQADPVHQSEPENSVASDIVEAAGGSGLQLFVDTGVPVDSEVIRHYVNEVLTEIIASMLGQREAQGTPATLVQTQDAQKEDTTVPTPAPTPEPSLKDPPSPVRTPDLSEHLSTATSPEKPPQESASPGPDRIPVGTPITTPIPSPTRVATPSPPTPANQSPEPGSLQIHLWEGSELPLEEEEQPELQPAPVVISVPRVDDQEESVIHPSSPVLSKPQSPPAPPLPPVIQKSESSSSSSSSSSESSCSSSVTVTETETAARHISEGELLLNHGQMAAVRVLEQEGVLLPNFMTSLNGSLHGVQDMDYDPPSEGQVIRAPHLPAHHDPVLSLLARMELGPISQSQQPEGWWEEESSGEVSEGQRPVLTAAEEIVLTGHSLMDQQTIRQSRNTQISPHATLTSPGQVIAEHTGAVVEDGGLSVNLRSSDEQKEAMVYQADTVSSPQPESSQMAQTVHRPAPILVRQYEEEPDFPQLRRLSDDAFFGADEKGEDTFLHTGEGGGGGRGSDVRVMSVRLPSVKQDQESVSLSSVEGDTDSSANDVF.

Residues 57 to 68 show a composition bias toward basic and acidic residues; sequence EHVHSADERRTE. Disordered stretches follow at residues 57–84, 227–247, 312–396, 411–466, and 489–523; these read EHVH…AGPE, AAEG…SAGR, SIRL…SPER, TADN…TTVQ, and ADAF…APIS. Positions 204–270 form a coiled coil; it reads LMKAQSEMEA…QRLQHLETIQ (67 aa). Composition is skewed to polar residues over residues 312–321, 360–391, 412–447, and 454–466; these read SIRLSATDNP, HWTS…PNNR, ADNS…NGQN, and EPTN…TTVQ. Residues 513–523 show a composition bias toward pro residues; sequence TAPPPATAPIS. Positions 553 to 639 are required for centrosomal localization; that stretch reads SMFEDAGLVL…SSERIVDAAV (87 aa). Residues 556-586 are a coiled coil; that stretch reads EDAGLVLRQVRQSKKTLEENLEAILRAKDGE. The segment covering 639–650 has biased composition (basic and acidic residues); that stretch reads VSRREAGQRTRA. Disordered stretches follow at residues 639–687, 1079–1178, 1214–1265, 1354–1374, and 1500–1554; these read VSRR…AVKQ, GTPA…EPGS, QEES…SVTV, QSQQ…SEGQ, and KGED…NDVF. The span at 1080 to 1089 shows a compositional bias: polar residues; sequence TPATLVQTQD. Composition is skewed to pro residues over residues 1099-1115 and 1230-1239; these read TPAP…PSPV and QSPPAPPLPP. Low complexity predominate over residues 1240–1265; that stretch reads VIQKSESSSSSSSSSSESSCSSSVTV. The segment covering 1535-1554 has biased composition (polar residues); that stretch reads ESVSLSSVEGDTDSSANDVF.

It belongs to the TALPID3 family.

Its subcellular location is the cytoplasm. It localises to the cytoskeleton. The protein resides in the cilium basal body. The protein localises to the microtubule organizing center. It is found in the centrosome. Its subcellular location is the centriole. Functionally, required for ciliogenesis and sonic hedgehog/SHH signaling. This is Protein TALPID3 (talpid3) from Danio rerio (Zebrafish).